Consider the following 626-residue polypeptide: Basic helix-loop-helix ARNT-like protein 1 (626 aa).

The segment at 1-58 (MADQRMDISSTISDFMSPGPTDLLSSSLGTSGVDCNRKRKGSATDYQESMDTDKDDPH) is disordered. At serine 17 the chain carries Phosphoserine; by GSK3-beta. The span at 17–32 (SPGPTDLLSSSLGTSG) shows a compositional bias: low complexity. The residue at position 21 (threonine 21) is a Phosphothreonine; by GSK3-beta. Positions 36 to 41 (NRKRKG) match the Nuclear localization signal motif. The bHLH domain maps to 72–125 (NAREAHSQIEKRRRDKMNSFIDELASLVPTCNAMSRKLDKLTVLRMAVQHMKTL). Phosphoserine is present on serine 78. The residue at position 90 (serine 90) is a Phosphoserine; by CK2. Residues 142–152 (LSDDELKHLIL) carry the Nuclear export signal 1 motif. The region spanning 143 to 215 (SDDELKHLIL…EQLSSSDTAP (73 aa)) is the PAS 1 domain. A Glycyl lysine isopeptide (Lys-Gly) (interchain with G-Cter in SUMO2 and SUMO3) cross-link involves residue lysine 252. Lysine 259 is covalently cross-linked (Glycyl lysine isopeptide (Lys-Gly) (interchain with G-Cter in SUMO); alternate). Residue lysine 259 forms a Glycyl lysine isopeptide (Lys-Gly) (interchain with G-Cter in SUMO2); alternate linkage. The region spanning 326 to 396 (PQPVNGEIRV…ECHRQVLQTR (71 aa)) is the PAS 2 domain. The short motif at 361–369 (LAYLPQELL) is the Nuclear export signal 2 element. The 44-residue stretch at 401–444 (TNCYKFKIKDGSFITLRSRWFSFMNPWTKEVEYIVSTNTVVLAN) folds into the PAC domain. Disordered stretches follow at residues 459-492 (SPHSMDSMLPSGEGGPKRTHPTVPGIPGGTRAGA) and 511-595 (GSSP…SPSN). The segment at 508 to 588 (RIRGSSPSSC…IGIDMIDNDQ (81 aa)) is interaction with CIART. A compositionally biased stretch (low complexity) spans 511–521 (GSSPSSCGSSP). Lysine 538 carries the N6-acetyllysine modification.

In terms of assembly, component of the circadian clock oscillator which includes the CRY1/2 proteins, CLOCK or NPAS2, BMAL1 or BMAL2, CSNK1D and/or CSNK1E, TIMELESS and the PER1/2/3 proteins. Forms a heterodimer with CLOCK. The CLOCK-BMAL1 heterodimer is required for E-box-dependent transactivation, for CLOCK nuclear translocation and degradation, and, for phosphorylation of both CLOCK and BMAL1. Part of a nuclear complex which also includes RACK1 and PRKCA; RACK1 and PRKCA are recruited to the complex in a circadian manner. Interacts with NPAS2. Interacts with EZH2. Interacts with SUMO3. Interacts with SIRT1. Interacts with AHR. Interacts with ID1, ID2 and ID3. Interacts with DDX4. Interacts with OGT. Interacts with EED and SUZ12. Interacts with MTA1. Interacts with CIART. Interacts with HSP90. Interacts with KAT2B and EP300. Interacts with BHLHE40/DEC1 and BHLHE41/DEC2. Interacts with RELB and the interaction is enhanced in the presence of CLOCK. Interacts with PER1, PER2, CRY1 and CRY2 and this interaction requires a translocation to the nucleus. Interaction of the CLOCK-BMAL1 heterodimer with PER or CRY inhibits transcription activation. Interaction of the CLOCK-BMAL1 with CRY1 is independent of DNA but with PER2 is off DNA. The CLOCK-BMAL1 heterodimer interacts with GSK3B. Interacts with KDM5A. Interacts with KMT2A; in a circadian manner. Interacts with UBE3A. Interacts with PRKCG. Interacts with MAGEL2. Interacts with NCOA2. Interacts with THRAP3. The CLOCK-BMAL1 heterodimer interacts with PASD1. Interacts with PASD1. Interacts with USP9X. Interacts with PIWIL2 (via PIWI domain). Interacts with HDAC3. Interacts with HNF4A. In terms of processing, ubiquitinated, leading to its proteasomal degradation. Deubiquitinated by USP9X. Post-translationally, O-glycosylated; contains O-GlcNAc. O-glycosylation by OGT prevents protein degradation by inhibiting ubiquitination. It also stabilizes the CLOCK-BMAL1 heterodimer thereby increasing CLOCK-BMAL1-mediated transcription of genes in the negative loop of the circadian clock such as PER1/2/3 and CRY1/2. Acetylated on Lys-538 by CLOCK during the repression phase of the circadian cycle. Acetylation facilitates recruitment of CRY1 protein and initiates the repression phase of the circadian cycle. Acetylated at Lys-538 by KAT5 during the activation phase of the cycle, leading to recruitment of the positive transcription elongation factor b (P-TEFb) and BRD4, followed by productive elongation of circadian transcripts. Deacetylated by SIRT1, which may result in decreased protein stability. In terms of processing, phosphorylated upon dimerization with CLOCK. Phosphorylation enhances the transcriptional activity, alters the subcellular localization and decreases the stability of the CLOCK-BMAL1 heterodimer by promoting its degradation. Phosphorylation shows circadian variations in the liver with a peak between CT10 to CT14. Phosphorylation at Ser-90 by CK2 is essential for its nuclear localization, its interaction with CLOCK and controls CLOCK nuclear entry. Dephosphorylation at Ser-78 is important for dimerization with CLOCK and transcriptional activity. Post-translationally, sumoylated on Lys-259 upon dimerization with CLOCK. Predominantly conjugated to poly-SUMO2/3 rather than SUMO1 and the level of these conjugates undergo rhythmic variation, peaking at CT9-CT12. Sumoylation localizes it exclusively to the PML body and promotes its ubiquitination in the PML body, ubiquitin-dependent proteasomal degradation and the transcriptional activity of the CLOCK-BMAL1 heterodimer. Undergoes lysosome-mediated degradation in a time-dependent manner in the liver.

The protein localises to the nucleus. Its subcellular location is the cytoplasm. The protein resides in the PML body. Functionally, transcriptional activator which forms a core component of the circadian clock. The circadian clock, an internal time-keeping system, regulates various physiological processes through the generation of approximately 24 hour circadian rhythms in gene expression, which are translated into rhythms in metabolism and behavior. It is derived from the Latin roots 'circa' (about) and 'diem' (day) and acts as an important regulator of a wide array of physiological functions including metabolism, sleep, body temperature, blood pressure, endocrine, immune, cardiovascular, and renal function. Consists of two major components: the central clock, residing in the suprachiasmatic nucleus (SCN) of the brain, and the peripheral clocks that are present in nearly every tissue and organ system. Both the central and peripheral clocks can be reset by environmental cues, also known as Zeitgebers (German for 'timegivers'). The predominant Zeitgeber for the central clock is light, which is sensed by retina and signals directly to the SCN. The central clock entrains the peripheral clocks through neuronal and hormonal signals, body temperature and feeding-related cues, aligning all clocks with the external light/dark cycle. Circadian rhythms allow an organism to achieve temporal homeostasis with its environment at the molecular level by regulating gene expression to create a peak of protein expression once every 24 hours to control when a particular physiological process is most active with respect to the solar day. Transcription and translation of core clock components (CLOCK, NPAS2, BMAL1, BMAL2, PER1, PER2, PER3, CRY1 and CRY2) plays a critical role in rhythm generation, whereas delays imposed by post-translational modifications (PTMs) are important for determining the period (tau) of the rhythms (tau refers to the period of a rhythm and is the length, in time, of one complete cycle). A diurnal rhythm is synchronized with the day/night cycle, while the ultradian and infradian rhythms have a period shorter and longer than 24 hours, respectively. Disruptions in the circadian rhythms contribute to the pathology of cardiovascular diseases, cancer, metabolic syndromes and aging. A transcription/translation feedback loop (TTFL) forms the core of the molecular circadian clock mechanism. Transcription factors, CLOCK or NPAS2 and BMAL1 or BMAL2, form the positive limb of the feedback loop, act in the form of a heterodimer and activate the transcription of core clock genes and clock-controlled genes (involved in key metabolic processes), harboring E-box elements (5'-CACGTG-3') within their promoters. The core clock genes: PER1/2/3 and CRY1/2 which are transcriptional repressors form the negative limb of the feedback loop and interact with the CLOCK|NPAS2-BMAL1|BMAL2 heterodimer inhibiting its activity and thereby negatively regulating their own expression. This heterodimer also activates nuclear receptors NR1D1/2 and RORA/B/G, which form a second feedback loop and which activate and repress BMAL1 transcription, respectively. BMAL1 positively regulates myogenesis and negatively regulates adipogenesis via the transcriptional control of the genes of the canonical Wnt signaling pathway. Plays a role in normal pancreatic beta-cell function; regulates glucose-stimulated insulin secretion via the regulation of antioxidant genes NFE2L2/NRF2 and its targets SESN2, PRDX3, CCLC and CCLM. Negatively regulates the mTORC1 signaling pathway; regulates the expression of MTOR and DEPTOR. Controls diurnal oscillations of Ly6C inflammatory monocytes; rhythmic recruitment of the PRC2 complex imparts diurnal variation to chemokine expression that is necessary to sustain Ly6C monocyte rhythms. Regulates the expression of HSD3B2, STAR, PTGS2, CYP11A1, CYP19A1 and LHCGR in the ovary and also the genes involved in hair growth. Plays an important role in adult hippocampal neurogenesis by regulating the timely entry of neural stem/progenitor cells (NSPCs) into the cell cycle and the number of cell divisions that take place prior to cell-cycle exit. Regulates the circadian expression of CIART and KLF11. The CLOCK-BMAL1 heterodimer regulates the circadian expression of SERPINE1/PAI1, VWF, B3, CCRN4L/NOC, NAMPT, DBP, MYOD1, PPARGC1A, PPARGC1B, SIRT1, GYS2, F7, NGFR, GNRHR, BHLHE40/DEC1, ATF4, MTA1, KLF10 and also genes implicated in glucose and lipid metabolism. Promotes rhythmic chromatin opening, regulating the DNA accessibility of other transcription factors. The NPAS2-BMAL1 heterodimer positively regulates the expression of MAOA, F7 and LDHA and modulates the circadian rhythm of daytime contrast sensitivity by regulating the rhythmic expression of adenylate cyclase type 1 (ADCY1) in the retina. The preferred binding motif for the CLOCK-BMAL1 heterodimer is 5'-CACGTGA-3', which contains a flanking adenine nucleotide at the 3-prime end of the canonical 6-nucleotide E-box sequence. CLOCK specifically binds to the half-site 5'-CAC-3', while BMAL1 binds to the half-site 5'-GTGA-3'. The CLOCK-BMAL1 heterodimer also recognizes the non-canonical E-box motifs 5'-AACGTGA-3' and 5'-CATGTGA-3'. Essential for the rhythmic interaction of CLOCK with ASS1 and plays a critical role in positively regulating CLOCK-mediated acetylation of ASS1. Plays a role in protecting against lethal sepsis by limiting the expression of immune checkpoint protein CD274 in macrophages in a PKM2-dependent manner. Regulates the diurnal rhythms of skeletal muscle metabolism via transcriptional activation of genes promoting triglyceride synthesis (DGAT2) and metabolic efficiency (COQ10B). The polypeptide is Basic helix-loop-helix ARNT-like protein 1 (BMAL1) (Mesocricetus auratus (Golden hamster)).